A 509-amino-acid polypeptide reads, in one-letter code: ATP synthase subunit alpha (509 aa).

169-176 provides a ligand contact to ATP; it reads GDRQTGKT.

Belongs to the ATPase alpha/beta chains family. F-type ATPases have 2 components, CF(1) - the catalytic core - and CF(0) - the membrane proton channel. CF(1) has five subunits: alpha(3), beta(3), gamma(1), delta(1), epsilon(1). CF(0) has three main subunits: a(1), b(2) and c(9-12). The alpha and beta chains form an alternating ring which encloses part of the gamma chain. CF(1) is attached to CF(0) by a central stalk formed by the gamma and epsilon chains, while a peripheral stalk is formed by the delta and b chains.

Its subcellular location is the cell inner membrane. The catalysed reaction is ATP + H2O + 4 H(+)(in) = ADP + phosphate + 5 H(+)(out). Functionally, produces ATP from ADP in the presence of a proton gradient across the membrane. The alpha chain is a regulatory subunit. This chain is ATP synthase subunit alpha, found in Methylobacterium sp. (strain 4-46).